A 501-amino-acid chain; its full sequence is UPF0616 protein C1687.04 (501 aa).

Belongs to the UPF0616 family.

The protein localises to the cytoplasm. The protein resides in the nucleus. In Schizosaccharomyces pombe (strain 972 / ATCC 24843) (Fission yeast), this protein is UPF0616 protein C1687.04.